We begin with the raw amino-acid sequence, 785 residues long: Phenylalanine--tRNA ligase beta subunit (785 aa).

Residues 39–147 (FPIPRGVVFA…DALPPGTPLA (109 aa)) enclose the tRNA-binding domain. A B5 domain is found at 399 to 474 (KPPEAIPFRP…RIQGYETIPL (76 aa)). Mg(2+) contacts are provided by Asp452, Asp458, Glu461, and Glu462. The FDX-ACB domain occupies 688-780 (SRHPAAFRDL…ALRARGFGLR (93 aa)).

This sequence belongs to the phenylalanyl-tRNA synthetase beta subunit family. Type 1 subfamily. As to quaternary structure, tetramer of two alpha and two beta subunits. Mg(2+) serves as cofactor.

Its subcellular location is the cytoplasm. It carries out the reaction tRNA(Phe) + L-phenylalanine + ATP = L-phenylalanyl-tRNA(Phe) + AMP + diphosphate + H(+). This Thermus thermophilus (strain ATCC BAA-163 / DSM 7039 / HB27) protein is Phenylalanine--tRNA ligase beta subunit.